The following is an 842-amino-acid chain: Gamma-aminobutyric acid type B receptor subunit 2 (842 aa).

Positions 1–17 (MSRWLSLLLFAVQAVGG) are cleaved as a signal peptide. Residues 18-438 (YEAGEELSCK…TERRREHISS (421 aa)) lie on the Extracellular side of the membrane. Asparagine 274, asparagine 279, asparagine 327, and asparagine 366 each carry an N-linked (GlcNAc...) asparagine glycan. Residues 439–459 (ILFLAMSLLALIGIFLALIFL) form a helical membrane-spanning segment. Residues 460 to 477 (LINFRYRNHRFIKMSSPN) lie on the Cytoplasmic side of the membrane. Residues 478–498 (LNNIIIAGSICTFASVIMLGL) traverse the membrane as a helical segment. The Extracellular portion of the chain corresponds to 499–506 (DTRIVSPD). The chain crosses the membrane as a helical span at residues 507–527 (VFVWLCYTKTWTLCIGFTLSF). Residues 528-556 (GAMFSKTWRVHSIFTNIRMDRKAIKDSKL) lie on the Cytoplasmic side of the membrane. Residues 557 to 577 (FIILGILLFIDICVLVTWAFV) form a helical membrane-spanning segment. The Extracellular segment spans residues 578 to 610 (SPFSYTVTELPHIPEDNIVIIPEVEKCNSSHSG). N-linked (GlcNAc...) asparagine glycosylation occurs at asparagine 605. A helical membrane pass occupies residues 611 to 631 (VFQAVLYAVKGVLMILGCFLA). Over 632–647 (WETRHVNVPALNDSKY) the chain is Cytoplasmic. A helical membrane pass occupies residues 648–668 (IGTSVYCCVVMSVLGLSTSVI). The Extracellular portion of the chain corresponds to 669-676 (LQERVNEM). The chain crosses the membrane as a helical span at residues 677–697 (FSLASFFVIFSTTLTLCLVFV). Residues 698–842 (PKVIELARNP…VDPDEPSTKL (145 aa)) lie on the Cytoplasmic side of the membrane. Positions 725–740 (AKTSQPMSPQPRSDSS) are enriched in polar residues. 2 disordered regions span residues 725–744 (AKTS…GDLI) and 791–842 (SPSS…STKL).

It belongs to the G-protein coupled receptor 3 family. In terms of assembly, may form a heterodimer with gbb-1. As to expression, expressed in cholinergic motor neurons.

It localises to the cell membrane. Functionally, component of a heterodimeric G-protein coupled receptor for GABA, formed by gbb-1 and gbb-2. Within the heterodimeric GABA receptor, only gbb-1 seems to bind agonists, while gbb-2 mediates coupling to G proteins. Ligand binding causes a conformation change that triggers signaling via guanine nucleotide-binding proteins (G proteins) and modulates the activity of down-stream effectors, such as adenylate cyclase. Signaling inhibits adenylate cyclase, stimulates phospholipase A2, activates potassium channels, inactivates voltage-dependent calcium-channels and modulates inositol phospholipid hydrolysis. Plays a critical role in the fine-tuning of inhibitory synaptic transmission. Pre-synaptic GABA receptor inhibits neurotransmitter release by down-regulating high-voltage activated calcium channels, whereas postsynaptic GABA receptor decreases neuronal excitability by activating a prominent inwardly rectifying potassium (Kir) conductance that underlies the late inhibitory postsynaptic potentials. Along with gbb-1, may couple to the G(o)-alpha G-protein goa-1 to negatively regulate cholinergic receptor activity in the presence of high levels of acetylcholine in ventral cord motor neurons. As acetylcholine depolarizes body wall muscles, modulation of acetylcholine levels most likely results in the control of locomotory behavior. Regulates locomotory behavior in response to GABA release by GABAergic motor neurons. This is Gamma-aminobutyric acid type B receptor subunit 2 from Caenorhabditis elegans.